A 60-amino-acid polypeptide reads, in one-letter code: MSFMVSEEVTVKEGGPRMIVTGYSSGMVECRWYDGYGVKREAFHETELVPGEGSRSAEEV.

This is an uncharacterized protein from Escherichia coli O157:H7.